The sequence spans 1030 residues: Kinesin-related protein 6 (1030 aa).

The region spanning 3-66 (FENDQLYNWL…FHLLQQLKKQ (64 aa)) is the SAM domain. 2 disordered regions span residues 66–164 (QTPP…SDFM) and 178–308 (RQQY…EDDD). A compositionally biased stretch (polar residues) spans 68-80 (PPISNTSSPVINS). 4 stretches are compositionally biased toward low complexity: residues 81–117 (NNNNNNNNNNNNNNNNNNNNNNNNNNNNNNNNNNNNN), 125–164 (TSTSSLLSNNNLMSTQTQQSSSSSSSSSLSSKSNSNSDFM), 181–197 (YAKQQQQQQSTQTKYQS), and 225–238 (QQQQQQQQQQQQQD). A compositionally biased stretch (acidic residues) spans 239 to 290 (FEFEEEEEEEDQQQQYDEEEEEEEEYEEDFYKEDLGEIDDGNVLDISDDEPD). Positions 453–775 (RIRVCVRKRP…LRYADRVKEL (323 aa)) constitute a Kinesin motor domain. 543–550 (GQTGSGKT) contributes to the ATP binding site. 3 stretches are compositionally biased toward low complexity: residues 826 to 839 (INSQQPIIQQTSQP), 849 to 906 (QQQE…QTQP), and 981 to 1009 (PIQQQQQQQQPIQQQQQSTPQPSQLQTPQ). Disordered stretches follow at residues 826-915 (INSQ…KIDF) and 981-1030 (PIQQ…SSRN).

The protein belongs to the TRAFAC class myosin-kinesin ATPase superfamily. Kinesin family.

The protein resides in the cytoplasm. The protein localises to the cytoskeleton. Its function is as follows. Microtubule-associated force-producing protein that plays a role in organelle transport. Its motor activity is directed toward the microtubule's plus end. The chain is Kinesin-related protein 6 (kif6) from Dictyostelium discoideum (Social amoeba).